The chain runs to 122 residues: Large ribosomal subunit protein uL14 (122 aa).

This sequence belongs to the universal ribosomal protein uL14 family. Part of the 50S ribosomal subunit. Forms a cluster with proteins L3 and L19. In the 70S ribosome, L14 and L19 interact and together make contacts with the 16S rRNA in bridges B5 and B8.

Its function is as follows. Binds to 23S rRNA. Forms part of two intersubunit bridges in the 70S ribosome. This chain is Large ribosomal subunit protein uL14, found in Carsonella ruddii (strain PV).